Here is a 218-residue protein sequence, read N- to C-terminus: Cytidylate kinase (218 aa).

Glycine 7 to serine 15 serves as a coordination point for ATP.

It belongs to the cytidylate kinase family. Type 1 subfamily.

The protein localises to the cytoplasm. It carries out the reaction CMP + ATP = CDP + ADP. It catalyses the reaction dCMP + ATP = dCDP + ADP. The polypeptide is Cytidylate kinase (Borrelia hermsii (strain HS1 / DAH)).